We begin with the raw amino-acid sequence, 360 residues long: Decorin (360 aa).

The N-terminal stretch at 1 to 16 (MKATIIFLLLAQVSWA) is a signal peptide. The propeptide occupies 17–30 (GPFQQRGLFDFMLE). Residue serine 34 is glycosylated (O-linked (Xyl...) (glycosaminoglycan) serine). Disulfide bonds link cysteine 55–cysteine 61 and cysteine 59–cysteine 68. LRR repeat units follow at residues 74 to 94 (DKVP…NNKI), 95 to 118 (TEIK…NNKI), 119 to 142 (SKIS…KNHL), 143 to 163 (KELP…ENEI), 164 to 187 (TKVR…TNPL), 188 to 213 (KSSG…DTNI), 214 to 234 (TTIP…GNKI), 235 to 258 (TKVD…FNSI), 259 to 282 (SAVD…NNKL), 283 to 305 (IKVP…NNNI), 306 to 335 (SAVG…SNPV), and 336 to 360 (QYWE…GNYK). A glycan (N-linked (GlcNAc...) asparagine) is linked at asparagine 212. Asparagine 263 and asparagine 304 each carry an N-linked (GlcNAc...) asparagine glycan. Cysteine 314 and cysteine 347 form a disulfide bridge.

The protein belongs to the small leucine-rich proteoglycan (SLRP) family. SLRP class I subfamily. Binds to type I and type II collagen, fibronectin and TGF-beta. Forms a ternary complex with MFAP2 and ELN. Interacts with DPT. The attached glycosaminoglycan chain can be either chondroitin sulfate or dermatan sulfate depending upon the tissue of origin.

The protein localises to the secreted. It localises to the extracellular space. Its subcellular location is the extracellular matrix. Its function is as follows. May affect the rate of fibrils formation. The sequence is that of Decorin (DCN) from Equus caballus (Horse).